The primary structure comprises 322 residues: Protein farnesyltransferase/geranylgeranyltransferase type-1 subunit alpha (322 aa).

The tract at residues 1–27 is disordered; that stretch reads MSSSEEDDGYVPFSKRPEWSDVKPLAQ. PFTA repeat units lie at residues 62-95, 103-136, 138-171, 173-205, 213-246, and 287-321; these read RVLDLLEEVIQENPSNYTIWYYRREVLKAIEQDE, QEMNLLNDMGETDPKNYQIWNHRRFIVEKYIGSD, KEKEFLSGVLLEDAKNYHAWSHRQWLLKTYRDWN, ELAMVDKLLSLDHRNNSVWNHRFFVISNLNPSP, REVEFAFNHIRHSPNNESPWSYLKGLFKGQKIST, and NSLNICKLLSETIDPIHKNYWNFKYNTISDQLKLI.

It belongs to the protein prenyltransferase subunit alpha family. In terms of assembly, heterodimer of fntA and fntB (farnesyltransferase). Heterodimer of an alpha and a beta subunit. The cofactor is Mg(2+).

It carries out the reaction L-cysteinyl-[protein] + (2E,6E)-farnesyl diphosphate = S-(2E,6E)-farnesyl-L-cysteinyl-[protein] + diphosphate. The enzyme catalyses geranylgeranyl diphosphate + L-cysteinyl-[protein] = S-geranylgeranyl-L-cysteinyl-[protein] + diphosphate. In terms of biological role, catalyzes the transfer of a farnesyl or geranyl-geranyl moiety from farnesyl or geranyl-geranyl diphosphate to a cysteine at the fourth position from the C-terminus of several proteins having the C-terminal sequence Cys-aliphatic-aliphatic-X. The alpha subunit is thought to participate in a stable complex with the substrate. The beta subunit binds the peptide substrate. The protein is Protein farnesyltransferase/geranylgeranyltransferase type-1 subunit alpha (fntA) of Dictyostelium discoideum (Social amoeba).